The following is a 378-amino-acid chain: Myoglobin (378 aa).

Alanine 2 is subject to Blocked amino end (Ala). Histidine 332 lines the heme pocket.

Belongs to the indoleamine 2,3-dioxygenase family. As to quaternary structure, homodimer. Heme is required as a cofactor.

Its function is as follows. Serves a reserve supply of oxygen and facilitates the movement of oxygen within muscles. The sequence is that of Myoglobin from Haliotis diversicolor (Abalone).